A 339-amino-acid polypeptide reads, in one-letter code: Serine/threonine-protein kinase SAPK2 (339 aa).

The region spanning Tyr4–Phe260 is the Protein kinase domain. ATP is bound by residues Ile10 to Ala18 and Lys33. Asp123 functions as the Proton acceptor in the catalytic mechanism. The C-terminal stretch occupies residues Glu253–Leu339.

It belongs to the protein kinase superfamily. Ser/Thr protein kinase family. Post-translationally, phosphorylated.

It catalyses the reaction L-seryl-[protein] + ATP = O-phospho-L-seryl-[protein] + ADP + H(+). The catalysed reaction is L-threonyl-[protein] + ATP = O-phospho-L-threonyl-[protein] + ADP + H(+). May play a role in signal transduction of hyperosmotic response. Can phosphorylate BZIP46 in vitro. This chain is Serine/threonine-protein kinase SAPK2 (SAPK2), found in Oryza sativa subsp. indica (Rice).